A 347-amino-acid chain; its full sequence is MSESVPPTHTFTQIDDADLTGLNTLGLPARAQRLARPTTLDALSQVLAERNPAEPLFVIGEGSNLVICSDLPGLTLSLAIDGMSLVKQDNTHVWVAAGAGVHWDDLVAWTVEQGWQGLENLSLIPGTVGAAPFQNIGAYGVELSQLLEQVTVMDVVTAQVTHFAGNECEFAYRDSRFKSRDRGRYIITGIELRLNKMPQCNVSYGPLKARFGHLSQADILPAAVREHVIAVRQSKLPAPDVLANAGSFFKNPVVTKERGDALKRRFADLVAYTQPDGVKLAAGWLIEQAGWKGKRLGPVGMHSEQALVLVNHGNATSADVIALAEAVCADVQEKFGVALEQEPVLLP.

The FAD-binding PCMH-type domain occupies 27–197; sequence LPARAQRLAR…TGIELRLNKM (171 aa). R173 is a catalytic residue. S247 functions as the Proton donor in the catalytic mechanism. E342 is an active-site residue.

Belongs to the MurB family. It depends on FAD as a cofactor.

Its subcellular location is the cytoplasm. The catalysed reaction is UDP-N-acetyl-alpha-D-muramate + NADP(+) = UDP-N-acetyl-3-O-(1-carboxyvinyl)-alpha-D-glucosamine + NADPH + H(+). It functions in the pathway cell wall biogenesis; peptidoglycan biosynthesis. Functionally, cell wall formation. This Alcanivorax borkumensis (strain ATCC 700651 / DSM 11573 / NCIMB 13689 / SK2) protein is UDP-N-acetylenolpyruvoylglucosamine reductase.